A 2368-amino-acid chain; its full sequence is Voltage-dependent P/Q-type calcium channel subunit alpha-1A (2368 aa).

Residues 1-100 lie on the Cytoplasmic side of the membrane; it reads MARFGDEMPG…KYAKKITEWP (100 aa). One copy of the I repeat lies at 65 to 365; sequence NPIPVRQNCL…LVLGVLSGEF (301 aa). A helical membrane pass occupies residues 101-119; the sequence is PFEYMILATIIANCIVLAL. The Extracellular segment spans residues 120 to 138; the sequence is EQHLPDDDKTPMSERLDDT. The chain crosses the membrane as a helical span at residues 139 to 156; the sequence is EPYFIGIFCFEAGIKIVA. The Cytoplasmic segment spans residues 157-168; the sequence is LGFAFHKGSYLR. The chain crosses the membrane as a helical span at residues 169–184; sequence NGWNVMDFVVVLTGIL. The Extracellular portion of the chain corresponds to 185-192; sequence ATVGTEFD. A helical membrane pass occupies residues 193–211; the sequence is LRTLRAVRVLRPLKLVSGI. At 212–230 the chain is on the cytoplasmic side; sequence PSLQVVLKSIMKAMIPLLQ. The helical transmembrane segment at 231–250 threads the bilayer; it reads IGLLLFFAILIFAIIGLEFY. At 251–337 the chain is on the extracellular side; it reads MGKFHTTCFE…NSNDASGNTW (87 aa). A glycan (N-linked (GlcNAc...) asparagine) is linked at N285. Residue E320 coordinates Ca(2+). A helical membrane pass occupies residues 338–362; it reads NWLYFIPLIIIGSFFMLNLVLGVLS. The Cytoplasmic portion of the chain corresponds to 363–489; it reads GEFAKERERV…FYIRRMVKTQ (127 aa). A binding to the beta subunit region spans residues 385-402; it reads QQIERELNGYMEWISKAE. T411 is subject to Phosphothreonine. A phosphoserine mark is found at S450 and S453. Residues 475-719 form an II repeat; sequence ERRMRFYIRR…VFLAIAVDNL (245 aa). The chain crosses the membrane as a helical span at residues 490–509; the sequence is AFYWTVLSLVALNTLCVAIV. At 510–523 the chain is on the extracellular side; sequence HYNQPEWLSDFLYY. The chain crosses the membrane as a helical span at residues 524 to 543; sequence AEFIFLGLFMSEMFIKMYGL. Residues 544 to 551 lie on the Cytoplasmic side of the membrane; that stretch reads GTRPYFHS. The helical transmembrane segment at 552–570 threads the bilayer; sequence SFNCFDCGVIIGSIFEVIW. The Extracellular portion of the chain corresponds to 571-580; the sequence is AVIKPGTSFG. Residues 581-599 form a helical membrane-spanning segment; the sequence is ISVLRALRLLRIFKVTKYW. At 600-618 the chain is on the cytoplasmic side; that stretch reads ASLRNLVVSLLNSMKSIIS. Residues 619–638 form a helical membrane-spanning segment; it reads LLFLLFLFIVVFALLGMQLF. Residues 639–691 are Extracellular-facing; it reads GGQFNFDEGTPPTNFDTFPAAIMTVFQILTGEDWNEVMYDGIKSQGGVQGGMV. E670 provides a ligand contact to Ca(2+). Residues 692 to 716 form a helical membrane-spanning segment; that stretch reads FSIYFIVLTLFGNYTLLNVFLAIAV. The Cytoplasmic segment spans residues 717-1190; the sequence is DNLANAQELT…TNPLRRLCHY (474 aa). S752 and S755 each carry phosphoserine. Positions 762–781 are disordered; the sequence is AVKEQQKNQKPTKSVWEQRT. Residues 769-779 show a composition bias toward polar residues; sequence NQKPTKSVWEQ. S792 carries the phosphoserine modification. 2 disordered regions span residues 823–1117 and 1137–1170; these read PLVV…RKPE and VNKN…KPMP. Composition is skewed to basic and acidic residues over residues 850-862, 871-924, and 932-958; these read RPRE…DARR, APGR…EGEP, and RPGD…RAAD. Phosphoserine is present on residues S1038, S1042, and S1051. Polar residues predominate over residues 1056 to 1073; sequence GNSTNPGPALATNPQNAA. Residues 1074–1083 are compositionally biased toward low complexity; it reads SRRTPNNPGN. The span at 1094–1111 shows a compositional bias: polar residues; the sequence is ENSLIVTNPSSTQPNSAK. The segment covering 1153–1163 has biased composition (acidic residues); sequence KKEEEEADPGE. Residues 1182 to 1465 form an III repeat; that stretch reads NPLRRLCHYI…IFVALIIITF (284 aa). The helical transmembrane segment at 1191–1214 threads the bilayer; the sequence is ILNLRYFEMCILMVIAMSSIALAA. Topologically, residues 1215–1231 are extracellular; that stretch reads EDPVQPNAPRNNVLRYF. A helical transmembrane segment spans residues 1232 to 1251; the sequence is DYVFTGVFTFEMVIKMIDLG. Over 1252–1258 the chain is Cytoplasmic; it reads LVLHQGA. A helical membrane pass occupies residues 1259-1282; it reads YFRDLWNILDFIVVSGALVAFAFT. Over 1283–1293 the chain is Extracellular; the sequence is GNSKGKDINTI. A helical transmembrane segment spans residues 1294–1311; the sequence is KSLRVLRVLRPLKTIKRL. Topologically, residues 1312-1330 are cytoplasmic; the sequence is PKLKAVFDCVVNSLKNVFN. Residues 1331–1350 traverse the membrane as a helical segment; the sequence is ILIVYMLFMFIFAVVAVQLF. Over 1351–1437 the chain is Extracellular; sequence KGKFFHCTDE…QGPSPGYRME (87 aa). Residue E1411 participates in Ca(2+) binding. A helical membrane pass occupies residues 1438 to 1462; that stretch reads MSIFYVVYFVVFPFFFVNIFVALII. Over 1463 to 1518 the chain is Cytoplasmic; that stretch reads ITFQEQGDKMMEEYSLEKNERACIDFAISAKPLTRHMPQNKQSFQYRMWQFVVSPP. An IV repeat occupies 1502–1765; sequence NKQSFQYRMW…LFVAVIMDNF (264 aa). A helical membrane pass occupies residues 1519–1537; the sequence is FEYTIMAMIALNTIVLMMK. Topologically, residues 1538-1551 are extracellular; sequence FYGASVAYENALRV. Residues 1552–1573 traverse the membrane as a helical segment; the sequence is FNIVFTSLFSLECVLKVMAFGI. The Cytoplasmic segment spans residues 1574-1580; the sequence is LNYFRDA. Residues 1581-1600 form a helical membrane-spanning segment; it reads WNIFDFVTVLGSITDILVTE. The Extracellular segment spans residues 1601–1607; sequence FGNNFIN. N1607 carries N-linked (GlcNAc...) asparagine glycosylation. Residues 1608–1626 form a helical membrane-spanning segment; sequence LSFLRLFRAARLIKLLRQG. The Cytoplasmic portion of the chain corresponds to 1627–1645; sequence YTIRILLWTFVQSFKALPY. The chain crosses the membrane as a helical span at residues 1646 to 1665; sequence VCLLIAMLFFIYAIIGMQVF. Topologically, residues 1666–1737 are extracellular; that stretch reads GNIGIDGEDE…ILTADCGNEF (72 aa). Residues 1738–1763 traverse the membrane as a helical segment; that stretch reads AYFYFVSFIFLCSFLMLNLFVAVIMD. Topologically, residues 1764–2368 are cytoplasmic; that stretch reads NFEYLTRDSS…AYSESEDDWC (605 aa). Residue T1935 is modified to Phosphothreonine. The interval 1940–2368 is disordered; the sequence is QRMEPPSPTQ…AYSESEDDWC (429 aa). Composition is skewed to polar residues over residues 1948–1963 and 1981–1997; these read TQEG…STQL and SWVT…TGTW. S1998, S2016, S2028, S2030, S2071, and S2091 each carry phosphoserine. A compositionally biased stretch (polar residues) spans 2008–2017; the sequence is PNSQPNSQSV. Basic and acidic residues predominate over residues 2018 to 2034; the sequence is EMREMGTDGYSDSEHYL. Positions 2063 to 2073 are enriched in polar residues; it reads DLSTISDTSPM. 2 stretches are compositionally biased toward basic and acidic residues: residues 2085–2102 and 2143–2153; these read RRLD…ENQR and PSKDRDQDRGR. Basic residues predominate over residues 2154–2172; that stretch reads PKDRKHRPHHHHHHHHHHP. Positions 2173–2209 are enriched in basic and acidic residues; that stretch reads PAPDRDRYAQERPDTGRARAREQRWSRSPSEGREHTT. A compositionally biased stretch (low complexity) spans 2213–2231; it reads GSSSVSGSPAPSTSGTSTP. Residues 2289–2305 are compositionally biased toward basic and acidic residues; sequence EGPRPRGADYTEPDSPR.

The protein belongs to the calcium channel alpha-1 subunit (TC 1.A.1.11) family. CACNA1A subfamily. As to quaternary structure, voltage-dependent calcium channels are multisubunit complexes, consisting of alpha-1, alpha-2, beta and delta subunits in a 1:1:1:1 ratio. The channel activity is directed by the pore-forming and voltage-sensitive alpha-1 subunit. In many cases, this subunit is sufficient to generate voltage-sensitive calcium channel activity. The auxiliary subunits beta and alpha-2/delta linked by a disulfide bridge regulate the channel activity. Interacts with CABP1. Interacts with the spider omega-agatoxin-IVA (AC P30288). Interacts with TSPOAP1. In terms of tissue distribution, brain specific; mainly found in the cerebellum, olfactory bulb, cerebral cortex, hippocampus, and inferior colliculus. In the hippocampus, expression occurs in pyramidal and granule neurons, as well as in interneurons. Purkinje cells contain predominantly P-type VSCC, the Q-type being a prominent calcium current in cerebellar granule cells.

The protein localises to the cell membrane. The catalysed reaction is Ca(2+)(in) = Ca(2+)(out). In terms of biological role, voltage-sensitive calcium channels (VSCC) mediate the entry of calcium ions into excitable cells and are also involved in a variety of calcium-dependent processes, including muscle contraction, hormone or neurotransmitter release, gene expression, cell motility, cell division and cell death. The isoform alpha-1A gives rise to P and/or Q-type calcium currents. P/Q-type calcium channels belong to the 'high-voltage activated' (HVA) group and are specifically blocked by the spider omega-agatoxin-IVA (AC P54282). They are however insensitive to dihydropyridines (DHP). This chain is Voltage-dependent P/Q-type calcium channel subunit alpha-1A, found in Mus musculus (Mouse).